Reading from the N-terminus, the 1005-residue chain is DNA-directed RNA polymerase subunit beta (1005 aa).

The protein belongs to the RNA polymerase beta chain family. In plastids the minimal PEP RNA polymerase catalytic core is composed of four subunits: alpha, beta, beta', and beta''. When a (nuclear-encoded) sigma factor is associated with the core the holoenzyme is formed, which can initiate transcription (Potential).

The protein resides in the plastid. It localises to the apicoplast. The catalysed reaction is RNA(n) + a ribonucleoside 5'-triphosphate = RNA(n+1) + diphosphate. Its function is as follows. DNA-dependent RNA polymerase catalyzes the transcription of DNA into RNA using the four ribonucleoside triphosphates as substrates. The sequence is that of DNA-directed RNA polymerase subunit beta (rpoB) from Theileria parva (East coast fever infection agent).